Reading from the N-terminus, the 175-residue chain is Orotate phosphoribosyltransferase (175 aa).

Residues Arg-88, Lys-89, Lys-92, and 114 to 122 contribute to the 5-phospho-alpha-D-ribose 1-diphosphate site; that span reads EDVVTTARG. Residues Thr-118 and Arg-146 each contribute to the orotate site.

Belongs to the purine/pyrimidine phosphoribosyltransferase family. PyrE subfamily. As to quaternary structure, homodimer. Mg(2+) is required as a cofactor.

The catalysed reaction is orotidine 5'-phosphate + diphosphate = orotate + 5-phospho-alpha-D-ribose 1-diphosphate. The protein operates within pyrimidine metabolism; UMP biosynthesis via de novo pathway; UMP from orotate: step 1/2. Functionally, catalyzes the transfer of a ribosyl phosphate group from 5-phosphoribose 1-diphosphate to orotate, leading to the formation of orotidine monophosphate (OMP). The chain is Orotate phosphoribosyltransferase from Methanocella arvoryzae (strain DSM 22066 / NBRC 105507 / MRE50).